The following is a 504-amino-acid chain: Maturase K (504 aa).

It belongs to the intron maturase 2 family. MatK subfamily.

The protein resides in the plastid. The protein localises to the chloroplast. In terms of biological role, usually encoded in the trnK tRNA gene intron. Probably assists in splicing its own and other chloroplast group II introns. The polypeptide is Maturase K (Gossypium barbadense (Sea Island cotton)).